A 165-amino-acid polypeptide reads, in one-letter code: Large ribosomal subunit protein uL10 (165 aa).

Belongs to the universal ribosomal protein uL10 family. In terms of assembly, part of the ribosomal stalk of the 50S ribosomal subunit. The N-terminus interacts with L11 and the large rRNA to form the base of the stalk. The C-terminus forms an elongated spine to which L12 dimers bind in a sequential fashion forming a multimeric L10(L12)X complex.

Functionally, forms part of the ribosomal stalk, playing a central role in the interaction of the ribosome with GTP-bound translation factors. This is Large ribosomal subunit protein uL10 from Dechloromonas aromatica (strain RCB).